A 406-amino-acid polypeptide reads, in one-letter code: Ascaroside receptor GPR2 (406 aa).

Residues Met1–Arg29 are Extracellular-facing. The chain crosses the membrane as a helical span at residues Ala30–Ala50. Topologically, residues Cys51–Gln61 are cytoplasmic. A helical membrane pass occupies residues Leu62–Gly82. Residues Trp83–Gln107 are Extracellular-facing. Cys99 and Cys173 form a disulfide bridge. A helical membrane pass occupies residues Val108 to Leu128. Topologically, residues Gly129–Trp143 are cytoplasmic. A helical membrane pass occupies residues Ile144–Leu164. At Gly165 to Asn185 the chain is on the extracellular side. The chain crosses the membrane as a helical span at residues Phe186–Ile206. Topologically, residues Val207–Lys326 are cytoplasmic. Residues Met327–Tyr347 form a helical membrane-spanning segment. Over Gln348–Pro356 the chain is Extracellular. A helical membrane pass occupies residues Leu357 to Val377. At Tyr378–Gly406 the chain is on the cytoplasmic side.

The protein belongs to the G-protein coupled receptor 1 family. In terms of assembly, interacts with ascaroside receptor GPR3; may form a functional heterodimer. Interacts with guanine nucleotide-binding protein alpha GPA2; to activate adenylate cyclase and positively regulate nematode trap formation.

It is found in the cell membrane. Its function is as follows. G protein-coupled receptor that senses nematode ascaroside pheromones and signals via adenylate cyclase to positively regulate trap formation for nematode capture. The sequence is that of Ascaroside receptor GPR2 from Arthrobotrys oligospora (strain ATCC 24927 / CBS 115.81 / DSM 1491) (Nematode-trapping fungus).